Reading from the N-terminus, the 307-residue chain is UDP-N-acetylenolpyruvoylglucosamine reductase (307 aa).

The FAD-binding PCMH-type domain maps to 34 to 198; it reads LGGKADVYIT…LEATFALKKA (165 aa). Arg177 is a catalytic residue. Ser227 functions as the Proton donor in the catalytic mechanism. Residue Glu297 is part of the active site.

Belongs to the MurB family. Requires FAD as cofactor.

The protein localises to the cytoplasm. It carries out the reaction UDP-N-acetyl-alpha-D-muramate + NADP(+) = UDP-N-acetyl-3-O-(1-carboxyvinyl)-alpha-D-glucosamine + NADPH + H(+). Its pathway is cell wall biogenesis; peptidoglycan biosynthesis. Functionally, cell wall formation. This Oceanobacillus iheyensis (strain DSM 14371 / CIP 107618 / JCM 11309 / KCTC 3954 / HTE831) protein is UDP-N-acetylenolpyruvoylglucosamine reductase.